Reading from the N-terminus, the 250-residue chain is Snake venom serine protease pictobin (250 aa).

The signal sequence occupies residues 1-11 (ANLLILQVSYA). The propeptide occupies 12–17 (QKSSEL). Residues 18-241 (VIGGDECNIN…HLHWILSIIA (224 aa)) enclose the Peptidase S1 domain. 5 cysteine pairs are disulfide-bonded: cysteine 24-cysteine 155, cysteine 42-cysteine 58, cysteine 134-cysteine 202, cysteine 166-cysteine 181, and cysteine 192-cysteine 217. The active-site Charge relay system is histidine 57. 2 N-linked (GlcNAc...) asparagine glycosylation sites follow: asparagine 71 and asparagine 95. Aspartate 102 acts as the Charge relay system in catalysis. N-linked (GlcNAc...) asparagine glycans are attached at residues asparagine 146 and asparagine 162. Serine 196 serves as the catalytic Charge relay system. Asparagine 243 is a glycosylation site (N-linked (GlcNAc...) asparagine).

It belongs to the peptidase S1 family. Snake venom subfamily. Monomer. In terms of tissue distribution, expressed by the venom gland.

It localises to the secreted. Snake venom serine protease that may impair the hemostatic system of the prey. This Bothrops pictus (Desert lancehead) protein is Snake venom serine protease pictobin.